The chain runs to 459 residues: Siroheme synthase 2 (459 aa).

Residues 1–204 form a precorrin-2 dehydrogenase /sirohydrochlorin ferrochelatase region; the sequence is MDYLPIFCQL…EDRERVQQLT (204 aa). NAD(+) contacts are provided by residues 22-23 and 43-44; these read EI and LD. Ser128 bears the Phosphoserine mark. The tract at residues 216–459 is uroporphyrinogen-III C-methyltransferase; it reads GEVTLVGAGP…KLSWFSDQTA (244 aa). Position 225 (Pro225) interacts with S-adenosyl-L-methionine. Catalysis depends on Asp248, which acts as the Proton acceptor. The active-site Proton donor is Lys270. S-adenosyl-L-methionine contacts are provided by residues 301–303, Ile306, 331–332, Met382, and Gly411; these read GGD and TA.

It in the N-terminal section; belongs to the precorrin-2 dehydrogenase / sirohydrochlorin ferrochelatase family. In the C-terminal section; belongs to the precorrin methyltransferase family.

It catalyses the reaction uroporphyrinogen III + 2 S-adenosyl-L-methionine = precorrin-2 + 2 S-adenosyl-L-homocysteine + H(+). It carries out the reaction precorrin-2 + NAD(+) = sirohydrochlorin + NADH + 2 H(+). The enzyme catalyses siroheme + 2 H(+) = sirohydrochlorin + Fe(2+). It functions in the pathway cofactor biosynthesis; adenosylcobalamin biosynthesis; precorrin-2 from uroporphyrinogen III: step 1/1. Its pathway is cofactor biosynthesis; adenosylcobalamin biosynthesis; sirohydrochlorin from precorrin-2: step 1/1. The protein operates within porphyrin-containing compound metabolism; siroheme biosynthesis; precorrin-2 from uroporphyrinogen III: step 1/1. It participates in porphyrin-containing compound metabolism; siroheme biosynthesis; siroheme from sirohydrochlorin: step 1/1. It functions in the pathway porphyrin-containing compound metabolism; siroheme biosynthesis; sirohydrochlorin from precorrin-2: step 1/1. Its function is as follows. Multifunctional enzyme that catalyzes the SAM-dependent methylations of uroporphyrinogen III at position C-2 and C-7 to form precorrin-2 via precorrin-1. Then it catalyzes the NAD-dependent ring dehydrogenation of precorrin-2 to yield sirohydrochlorin. Finally, it catalyzes the ferrochelation of sirohydrochlorin to yield siroheme. The protein is Siroheme synthase 2 of Pectobacterium atrosepticum (strain SCRI 1043 / ATCC BAA-672) (Erwinia carotovora subsp. atroseptica).